We begin with the raw amino-acid sequence, 359 residues long: MSSQTPTAQNLSFVLEGIHRVKFEDRPIPKLKSPHDVIVNVKYTGICGSDVHYWDHGAIGQFVVKEPMVLGHESSGIVTQIGSAVTSLKVGDHVAMEPGIPCRRCEPCKAGKYNLCEKMAFAATPPYDGTLAKYYTLPEDFCYKLPESISLPEGALMEPLGVAVHIVRQANVTPGQTVVVFGAGPVGLLCCAVAKAFGAIRIIAVDIQKPRLDFAKKFAATATFEPSKAPATENATRMIAENDLGRGADVAIDASGVEPSVHTGIHVLRPGGTYVQGGMGRSEMNFPIMAACTKELNIKGSFRYGSGDYKLAVQLVASGQINVKELITGIVKFEDAEQAFKDVKTGKGIKTLIAGPGAA.

Residues cysteine 47, histidine 72, and glutamate 73 each contribute to the Zn(2+) site. Residue 182 to 187 coordinates NAD(+); the sequence is GAGPVG.

This sequence belongs to the zinc-containing alcohol dehydrogenase family. The cofactor is Zn(2+).

The enzyme catalyses xylitol + NAD(+) = D-xylulose + NADH + H(+). It functions in the pathway carbohydrate degradation; L-arabinose degradation via L-arabinitol; D-xylulose 5-phosphate from L-arabinose (fungal route): step 4/5. Its function is as follows. Xylitol dehydrogenase which catalyzes the conversion of xylitol to D-xylulose. Xylose is a major component of hemicelluloses such as xylan. Most fungi utilize D-xylose via three enzymatic reactions, xylose reductase (XR), xylitol dehydrogenase (XDH), and xylulokinase, to form xylulose 5-phosphate, which enters pentose phosphate pathway. This is Probable D-xylulose reductase A (xdhA) from Emericella nidulans (strain FGSC A4 / ATCC 38163 / CBS 112.46 / NRRL 194 / M139) (Aspergillus nidulans).